The primary structure comprises 238 residues: Probable 2-phosphosulfolactate phosphatase (238 aa).

The protein belongs to the ComB family. The cofactor is Mg(2+).

It carries out the reaction (2R)-O-phospho-3-sulfolactate + H2O = (2R)-3-sulfolactate + phosphate. The protein is Probable 2-phosphosulfolactate phosphatase of Clostridium beijerinckii (strain ATCC 51743 / NCIMB 8052) (Clostridium acetobutylicum).